Here is a 288-residue protein sequence, read N- to C-terminus: S-methyl-5'-thioadenosine phosphorylase (288 aa).

Residues Ser-10, 52 to 53 (RH), and 85 to 86 (TA) each bind phosphate. A substrate-binding site is contributed by Met-188. A phosphate-binding site is contributed by Thr-189. 212–214 (DYD) serves as a coordination point for substrate.

The protein belongs to the PNP/MTAP phosphorylase family. MTAP subfamily. Homotrimer.

The protein localises to the cytoplasm. Its subcellular location is the nucleus. It carries out the reaction S-methyl-5'-thioadenosine + phosphate = 5-(methylsulfanyl)-alpha-D-ribose 1-phosphate + adenine. Its pathway is amino-acid biosynthesis; L-methionine biosynthesis via salvage pathway; S-methyl-5-thio-alpha-D-ribose 1-phosphate from S-methyl-5'-thioadenosine (phosphorylase route): step 1/1. In terms of biological role, catalyzes the reversible phosphorylation of S-methyl-5'-thioadenosine (MTA) to adenine and 5-methylthioribose-1-phosphate. Involved in the breakdown of MTA, a major by-product of polyamine biosynthesis. Responsible for the first step in the methionine salvage pathway after MTA has been generated from S-adenosylmethionine. Has broad substrate specificity with 6-aminopurine nucleosides as preferred substrates. This is S-methyl-5'-thioadenosine phosphorylase from Caenorhabditis elegans.